Consider the following 427-residue polypeptide: Glutamate-1-semialdehyde 2,1-aminomutase 1 (427 aa).

Lys-265 carries the N6-(pyridoxal phosphate)lysine modification.

The protein belongs to the class-III pyridoxal-phosphate-dependent aminotransferase family. HemL subfamily. In terms of assembly, homodimer. Pyridoxal 5'-phosphate serves as cofactor.

It is found in the cytoplasm. It catalyses the reaction (S)-4-amino-5-oxopentanoate = 5-aminolevulinate. It participates in porphyrin-containing compound metabolism; protoporphyrin-IX biosynthesis; 5-aminolevulinate from L-glutamyl-tRNA(Glu): step 2/2. The chain is Glutamate-1-semialdehyde 2,1-aminomutase 1 from Lachnoclostridium phytofermentans (strain ATCC 700394 / DSM 18823 / ISDg) (Clostridium phytofermentans).